Reading from the N-terminus, the 113-residue chain is UPF0482 protein YnfB (113 aa).

The N-terminal stretch at 1 to 28 (MKITLSKRIGLLAFLLPCALALSTTVHA) is a signal peptide.

Belongs to the UPF0482 family.

The protein is UPF0482 protein YnfB of Shigella dysenteriae serotype 1 (strain Sd197).